Reading from the N-terminus, the 145-residue chain is Trafficking protein particle complex subunit 1 (145 aa).

This sequence belongs to the TRAPP small subunits family. BET5 subfamily. As to quaternary structure, part of the multisubunit transport protein particle (TRAPP) complex. The heterodimer TRAPPC6B-TRAPPC3 interacts with TRAPPC1 likely providing a core for TRAPP complex formation.

The protein localises to the golgi apparatus. It localises to the cis-Golgi network. The protein resides in the endoplasmic reticulum. Its function is as follows. May play a role in vesicular transport from endoplasmic reticulum to Golgi. In Bos taurus (Bovine), this protein is Trafficking protein particle complex subunit 1 (TRAPPC1).